The primary structure comprises 876 residues: Alanine--tRNA ligase (876 aa).

4 residues coordinate Zn(2+): H564, H568, C666, and H670.

Belongs to the class-II aminoacyl-tRNA synthetase family. In terms of assembly, homotetramer. Zn(2+) serves as cofactor.

Its subcellular location is the cytoplasm. It catalyses the reaction tRNA(Ala) + L-alanine + ATP = L-alanyl-tRNA(Ala) + AMP + diphosphate. Catalyzes the attachment of alanine to tRNA(Ala) in a two-step reaction: alanine is first activated by ATP to form Ala-AMP and then transferred to the acceptor end of tRNA(Ala). Also edits incorrectly charged Ser-tRNA(Ala) and Gly-tRNA(Ala) via its editing domain. This is Alanine--tRNA ligase from Salmonella choleraesuis (strain SC-B67).